A 299-amino-acid polypeptide reads, in one-letter code: B3 domain-containing transcription factor NGA2 (299 aa).

The segment at 1-21 (MNQEDKEKPIEEASSSMEREH) is disordered. The TF-B3 DNA-binding region spans 23–129 (FDKVVTPSDV…KLYIDWRRRP (107 aa)). Residues 226–249 (GGGGSVNSTEEESSSSGGSIPRGR) form a disordered region.

The protein localises to the nucleus. Functionally, regulates lateral organ growth. Functionally redundant with NGA1, NGA3 and NGA4. The sequence is that of B3 domain-containing transcription factor NGA2 (NGA2) from Arabidopsis thaliana (Mouse-ear cress).